A 306-amino-acid polypeptide reads, in one-letter code: Putative B3 domain-containing protein Os03g0621600 (306 aa).

The segment at residues 29–122 (FSVLCLMPIM…QLKTLIFDSS (94 aa)) is a DNA-binding region (TF-B3 1). Residues 139 to 166 (YDIAMRNSQDEKKKRKQRDISRQGTVKP) form a disordered region. Residues 210-306 (GYVMNNSSIH…VMDVHIIRRK (97 aa)) constitute a DNA-binding region (TF-B3 2).

It localises to the nucleus. The sequence is that of Putative B3 domain-containing protein Os03g0621600 from Oryza sativa subsp. japonica (Rice).